A 276-amino-acid polypeptide reads, in one-letter code: Homeobox-leucine zipper protein HOX11 (276 aa).

Positions 1 to 92 are disordered; that stretch reads MVDGHLEAST…DDGGSARKKL (92 aa). Over residues 39 to 48 the composition is skewed to polar residues; the sequence is LSSSPNNSAG. A compositionally biased stretch (gly residues) spans 58–73; that stretch reads HGLGGNDAAPGGGGGD. Positions 87 to 146 form a DNA-binding region, homeobox; the sequence is SARKKLRLSKEQSAFLEESFKEHSTLNPKQKLALAKQLNLRPRQVEVWFQNRRARTKLKQ. Positions 145-189 are leucine-zipper; the sequence is KQTEVDCEYLKRCCETLTEENRRLQKELAELRALKTVHPFYMHLP. Residues 214-244 form a disordered region; it reads AATSSTAAPPAAPSSGGIAATSSSSAAAAAA.

The protein belongs to the HD-ZIP homeobox family. Class II subfamily. In terms of tissue distribution, expressed in stems, leaf sheaths and blades and panicles.

The protein localises to the nucleus. Functionally, probable transcription factor. This is Homeobox-leucine zipper protein HOX11 (HOX11) from Oryza sativa subsp. indica (Rice).